The chain runs to 199 residues: uncharacterized protein (199 aa).

Positions 1 to 41 (MKFKRDENQNSTHHRGNKNNTNNDDDDKEEEEEIINDTTMP) are disordered. Over residues 23–35 (NDDDDKEEEEEII) the composition is skewed to acidic residues. Transmembrane regions (helical) follow at residues 73–93 (LILD…FAFW), 96–116 (ISTY…VSFL), and 166–186 (IAIA…SPYL).

It localises to the membrane. This is an uncharacterized protein from Dictyostelium discoideum (Social amoeba).